The sequence spans 55 residues: Large ribosomal subunit protein bL33 (55 aa).

It belongs to the bacterial ribosomal protein bL33 family.

The chain is Large ribosomal subunit protein bL33 from Acidothermus cellulolyticus (strain ATCC 43068 / DSM 8971 / 11B).